The chain runs to 489 residues: Ketol-acid reductoisomerase (NADP(+)) (489 aa).

The KARI N-terminal Rossmann domain occupies 17–208 (LGVCEFMEQS…GGHKAGVLRS (192 aa)). NADP(+)-binding positions include 45–48 (CGAQ), R68, R76, S78, and 108–110 (DKQ). H132 is an active-site residue. G158 serves as a coordination point for NADP(+). KARI C-terminal knotted domains follow at residues 209–344 (SFVA…KTAP) and 345–485 (QEAP…MTAM). Mg(2+) is bound by residues D217, E221, E389, and E393. Residue S414 participates in substrate binding.

Belongs to the ketol-acid reductoisomerase family. Requires Mg(2+) as cofactor.

It carries out the reaction (2R)-2,3-dihydroxy-3-methylbutanoate + NADP(+) = (2S)-2-acetolactate + NADPH + H(+). The catalysed reaction is (2R,3R)-2,3-dihydroxy-3-methylpentanoate + NADP(+) = (S)-2-ethyl-2-hydroxy-3-oxobutanoate + NADPH + H(+). It participates in amino-acid biosynthesis; L-isoleucine biosynthesis; L-isoleucine from 2-oxobutanoate: step 2/4. Its pathway is amino-acid biosynthesis; L-valine biosynthesis; L-valine from pyruvate: step 2/4. Functionally, involved in the biosynthesis of branched-chain amino acids (BCAA). Catalyzes an alkyl-migration followed by a ketol-acid reduction of (S)-2-acetolactate (S2AL) to yield (R)-2,3-dihydroxy-isovalerate. In the isomerase reaction, S2AL is rearranged via a Mg-dependent methyl migration to produce 3-hydroxy-3-methyl-2-ketobutyrate (HMKB). In the reductase reaction, this 2-ketoacid undergoes a metal-dependent reduction by NADPH to yield (R)-2,3-dihydroxy-isovalerate. This Flavobacterium johnsoniae (strain ATCC 17061 / DSM 2064 / JCM 8514 / BCRC 14874 / CCUG 350202 / NBRC 14942 / NCIMB 11054 / UW101) (Cytophaga johnsonae) protein is Ketol-acid reductoisomerase (NADP(+)).